The following is a 268-amino-acid chain: HLA class II histocompatibility antigen, DQ beta 2 chain (268 aa).

A signal peptide spans 1–32; it reads MSWKMALQIPGGFWAAAVTVMLVMLSTPVAEA. Residues 33-126 are beta-1; that stretch reads RDFPKDFLVQ…ELRTTLQRQV (94 aa). The Extracellular segment spans residues 33–229; that stretch reads RDFPKDFLVQ…RAQSESAQSK (197 aa). 2 disulfides stabilise this stretch: cysteine 47/cysteine 110 and cysteine 148/cysteine 204. Residue asparagine 51 is glycosylated (N-linked (GlcNAc...) asparagine). A beta-2 region spans residues 127–229; sequence EPTVTISPSR…RAQSESAQSK (103 aa). The 89-residue stretch at 128 to 216 folds into the Ig-like C1-type domain; that stretch reads PTVTISPSRT…EHPSLQSPIT (89 aa). A helical membrane pass occupies residues 230 to 250; it reads MLSGIGGFVLGLIFLGLGLII. Residues 251–268 are Cytoplasmic-facing; that stretch reads RHRGQKGPRGPPPAGLLH.

Belongs to the MHC class II family. Heterodimer of an alpha and a beta subunit; also referred as MHC class II molecule. Dimer formation with HLA-DQA2, but not with HLA-DQA1, is required for efficient exit from the endoplasmic reticulum (ER). In the ER, forms a heterononamer; 3 MHC class II molecules bind to a CD74 homotrimer (also known as invariant chain or HLA class II histocompatibility antigen gamma chain). In the endosomal/lysosomal system; CD74 undergoes sequential degradation by various proteases; leaving a small fragment termed CLIP on each MHC class II molecule. MHC class II molecule interacts with HLA_DM, and HLA_DO in B-cells, in order to release CLIP and facilitate the binding of antigenic peptides. Association with HLA-DMA also occurs in skin Langerhans cells, in post-Golgi compartments. In terms of tissue distribution, restricted to skin Langerhans cells (at protein level).

It localises to the cell membrane. The protein resides in the endoplasmic reticulum membrane. The protein localises to the golgi apparatus. Its subcellular location is the trans-Golgi network membrane. It is found in the endosome membrane. It localises to the lysosome membrane. Binds peptides derived from antigens that access the endocytic route of antigen presenting cells (APC) and presents them on the cell surface for recognition by the CD4 T-cells. The peptide binding cleft accommodates peptides of 10-30 residues. The peptides presented by MHC class II molecules are generated mostly by degradation of proteins that access the endocytic route, where they are processed by lysosomal proteases and other hydrolases. Exogenous antigens that have been endocytosed by the APC are thus readily available for presentation via MHC II molecules, and for this reason this antigen presentation pathway is usually referred to as exogenous. As membrane proteins on their way to degradation in lysosomes as part of their normal turn-over are also contained in the endosomal/lysosomal compartments, exogenous antigens must compete with those derived from endogenous components. Autophagy is also a source of endogenous peptides, autophagosomes constitutively fuse with MHC class II loading compartments. In addition to APCs, other cells of the gastrointestinal tract, such as epithelial cells, express MHC class II molecules and CD74 and act as APCs, which is an unusual trait of the GI tract. To produce a MHC class II molecule that presents an antigen, three MHC class II molecules (heterodimers of an alpha and a beta chain) associate with a CD74 trimer in the ER to form a heterononamer. Soon after the entry of this complex into the endosomal/lysosomal system where antigen processing occurs, CD74 undergoes a sequential degradation by various proteases, including CTSS and CTSL, leaving a small fragment termed CLIP (class-II-associated invariant chain peptide). The removal of CLIP is facilitated by HLA-DM via direct binding to the alpha-beta-CLIP complex so that CLIP is released. HLA-DM stabilizes MHC class II molecules until primary high affinity antigenic peptides are bound. The MHC II molecule bound to a peptide is then transported to the cell membrane surface. In B-cells, the interaction between HLA-DM and MHC class II molecules is regulated by HLA-DO. Primary dendritic cells (DCs) also to express HLA-DO. Lysosomal microenvironment has been implicated in the regulation of antigen loading into MHC II molecules, increased acidification produces increased proteolysis and efficient peptide loading. The polypeptide is HLA class II histocompatibility antigen, DQ beta 2 chain (HLA-DQB2) (Homo sapiens (Human)).